The following is a 489-amino-acid chain: Putative BTB/POZ domain-containing protein R773 (489 aa).

Residues 3 to 73 form the BTB domain; that stretch reads SNIELVITDE…GNTSYKFQDK (71 aa).

Belongs to the mimivirus BTB/WD family.

In Acanthamoeba polyphaga (Amoeba), this protein is Putative BTB/POZ domain-containing protein R773.